Reading from the N-terminus, the 247-residue chain is Membrane-spanning 4-domains subfamily A member 6D (247 aa).

Over 1-46 (MIPQVVTSETVTVISPNGISFPQTDKPQPSHQSQDSLKKHLKAEIK) the chain is Cytoplasmic. The helical transmembrane segment at 47 to 67 (VMAAIQIMCAVMVLSLGIILA) threads the bilayer. Residues 68–80 (SVPSNLHFTSVFS) lie on the Extracellular side of the membrane. Residues 81 to 101 (ILLESGYPFVGALFFAISGIL) form a helical membrane-spanning segment. Residues 102–121 (SIVTEKKMTKPLVHSSLALS) lie on the Cytoplasmic side of the membrane. The helical transmembrane segment at 122 to 142 (ILSVLSALTGIAILSVSLAAL) threads the bilayer. At 143 to 180 (EPALQQCKLAFTQLDTTQDAYHFFSPEPLNSCFVAKAA) the chain is on the extracellular side. Residues 181 to 201 (LTGVFSLMLISSVLELGLAVL) form a helical membrane-spanning segment. The Cytoplasmic portion of the chain corresponds to 202-247 (TATLWWKQSSSAFSGNVIFLSQNSKNKSSVSSESLCNPTYENILTS). Ser-235 bears the Phosphoserine mark.

It belongs to the MS4A family. As to expression, expressed in thymus, spleen, intestine, colon, testis, heart, liver, brain, kidney, peripheral lymph node and bone marrow.

The protein localises to the membrane. May be involved in signal transduction as a component of a multimeric receptor complex. This chain is Membrane-spanning 4-domains subfamily A member 6D (Ms4a6d), found in Mus musculus (Mouse).